The chain runs to 557 residues: Potassium-transporting ATPase potassium-binding subunit (557 aa).

The next 12 membrane-spanning stretches (helical) occupy residues Gly5 to Ser25, Leu63 to Gly83, Gly132 to Ile152, Leu170 to Ile190, Phe253 to Val273, Leu283 to Val303, Val329 to Ala349, Ala356 to Val376, Gly379 to Gly399, Leu416 to Met436, Leu484 to Ala504, and Leu526 to Ala546.

This sequence belongs to the KdpA family. In terms of assembly, the system is composed of three essential subunits: KdpA, KdpB and KdpC.

The protein localises to the cell inner membrane. Its function is as follows. Part of the high-affinity ATP-driven potassium transport (or Kdp) system, which catalyzes the hydrolysis of ATP coupled with the electrogenic transport of potassium into the cytoplasm. This subunit binds the periplasmic potassium ions and delivers the ions to the membrane domain of KdpB through an intramembrane tunnel. The polypeptide is Potassium-transporting ATPase potassium-binding subunit (Escherichia coli (strain SMS-3-5 / SECEC)).